We begin with the raw amino-acid sequence, 959 residues long: Glycine dehydrogenase (decarboxylating) (959 aa).

K708 is modified (N6-(pyridoxal phosphate)lysine).

This sequence belongs to the GcvP family. The glycine cleavage system is composed of four proteins: P, T, L and H. It depends on pyridoxal 5'-phosphate as a cofactor.

It carries out the reaction N(6)-[(R)-lipoyl]-L-lysyl-[glycine-cleavage complex H protein] + glycine + H(+) = N(6)-[(R)-S(8)-aminomethyldihydrolipoyl]-L-lysyl-[glycine-cleavage complex H protein] + CO2. The glycine cleavage system catalyzes the degradation of glycine. The P protein binds the alpha-amino group of glycine through its pyridoxal phosphate cofactor; CO(2) is released and the remaining methylamine moiety is then transferred to the lipoamide cofactor of the H protein. The sequence is that of Glycine dehydrogenase (decarboxylating) from Yersinia pseudotuberculosis serotype O:1b (strain IP 31758).